Reading from the N-terminus, the 162-residue chain is Ribosome maturation factor RimP (162 aa).

It belongs to the RimP family.

It localises to the cytoplasm. In terms of biological role, required for maturation of 30S ribosomal subunits. The chain is Ribosome maturation factor RimP from Cupriavidus necator (strain ATCC 17699 / DSM 428 / KCTC 22496 / NCIMB 10442 / H16 / Stanier 337) (Ralstonia eutropha).